We begin with the raw amino-acid sequence, 102 residues long: Small ribosomal subunit protein uS10 (102 aa).

The protein belongs to the universal ribosomal protein uS10 family. As to quaternary structure, part of the 30S ribosomal subunit.

In terms of biological role, involved in the binding of tRNA to the ribosomes. This chain is Small ribosomal subunit protein uS10, found in Desulforamulus reducens (strain ATCC BAA-1160 / DSM 100696 / MI-1) (Desulfotomaculum reducens).